Here is a 315-residue protein sequence, read N- to C-terminus: Calcium homeostasis modulator protein 4 (315 aa).

The Cytoplasmic segment spans residues 1 to 14; sequence MSPDLNCISSSLLR. Residues 15–37 form a helical membrane-spanning segment; it reads SEPCINSLIAILTVCGQQLFSSY. Residues 38–48 are Extracellular-facing; that stretch reads TFSCPCQVGKN. Intrachain disulfides connect C41/C132 and C43/C163. The helical transmembrane segment at 49 to 71 threads the bilayer; it reads FYYGSAFLVVPALILLIAGYALR. Topologically, residues 72–104 are cytoplasmic; it reads GQMWTVASEYCCCSCTPPYRRSSPLERRLACLM. Residues 105–130 traverse the membrane as a helical segment; the sequence is FFDITGRALVAPLTWLTVTLLTGTYY. Over 131–184 the chain is Extracellular; the sequence is ECAASEFASVDQYPMFANVTPSKREEMLAGFPCYTSAPSDVIPIRDEVALLHRY. A helical membrane pass occupies residues 185–208; sequence QSQMLGWILVVLATIALLLSKCLA. Over 209–315 the chain is Cytoplasmic; that stretch reads RCCSPLTSLQ…DRQEGIEMKP (107 aa).

It belongs to the CALHM family. As to quaternary structure, oligomerizes to form decameric and undecameric channels. Two hemichannels can assemble in a tail-to-tail manner to form a gap junction.

The protein resides in the cell membrane. Functionally, may assemble to form gap junction channel-like structures involved in intercellular communication. Channel gating and ion conductance are likely regulated by membrane lipids rather than by membrane depolarization or extracellular calcium levels. In Mus musculus (Mouse), this protein is Calcium homeostasis modulator protein 4.